Here is a 596-residue protein sequence, read N- to C-terminus: Elongation factor 4 (596 aa).

Residues 2–184 (KNIRNFSIIA…TIVKNIPSPA (183 aa)) form the tr-type G domain. Residues 14 to 19 (DHGKST) and 131 to 134 (NKID) each bind GTP.

This sequence belongs to the TRAFAC class translation factor GTPase superfamily. Classic translation factor GTPase family. LepA subfamily.

Its subcellular location is the cell inner membrane. The enzyme catalyses GTP + H2O = GDP + phosphate + H(+). Functionally, required for accurate and efficient protein synthesis under certain stress conditions. May act as a fidelity factor of the translation reaction, by catalyzing a one-codon backward translocation of tRNAs on improperly translocated ribosomes. Back-translocation proceeds from a post-translocation (POST) complex to a pre-translocation (PRE) complex, thus giving elongation factor G a second chance to translocate the tRNAs correctly. Binds to ribosomes in a GTP-dependent manner. The polypeptide is Elongation factor 4 (Colwellia psychrerythraea (strain 34H / ATCC BAA-681) (Vibrio psychroerythus)).